A 693-amino-acid polypeptide reads, in one-letter code: Auxin response factor 10 (693 aa).

Positions 115–217 form a DNA-binding region, TF-B3; sequence FAKTLTQSDA…DLCVGIRRAK (103 aa). One can recognise a PB1 domain in the interval 580–668; it reads TGHCKVFMES…DIGGDNVRKT (89 aa).

This sequence belongs to the ARF family. In terms of assembly, homodimers and heterodimers. Expressed in the whole plant.

The protein localises to the nucleus. In terms of biological role, auxin response factors (ARFs) are transcriptional factors that bind specifically to the DNA sequence 5'-TGTCTC-3' found in the auxin-responsive promoter elements (AuxREs). Could act as transcriptional activator or repressor. Formation of heterodimers with Aux/IAA proteins may alter their ability to modulate early auxin response genes expression. This chain is Auxin response factor 10 (ARF10), found in Arabidopsis thaliana (Mouse-ear cress).